The sequence spans 342 residues: Biotin synthase (342 aa).

Positions 38 to 262 constitute a Radical SAM core domain; it reads GQVQISTLLS…MMPTSYVRLS (225 aa). The [4Fe-4S] cluster site is built by Cys53, Cys57, and Cys60. [2Fe-2S] cluster is bound by residues Cys97, Cys128, Cys188, and Arg260.

This sequence belongs to the radical SAM superfamily. Biotin synthase family. As to quaternary structure, homodimer. The cofactor is [4Fe-4S] cluster. [2Fe-2S] cluster serves as cofactor.

It carries out the reaction (4R,5S)-dethiobiotin + (sulfur carrier)-SH + 2 reduced [2Fe-2S]-[ferredoxin] + 2 S-adenosyl-L-methionine = (sulfur carrier)-H + biotin + 2 5'-deoxyadenosine + 2 L-methionine + 2 oxidized [2Fe-2S]-[ferredoxin]. It participates in cofactor biosynthesis; biotin biosynthesis; biotin from 7,8-diaminononanoate: step 2/2. In terms of biological role, catalyzes the conversion of dethiobiotin (DTB) to biotin by the insertion of a sulfur atom into dethiobiotin via a radical-based mechanism. The chain is Biotin synthase from Baumannia cicadellinicola subsp. Homalodisca coagulata.